The following is a 142-amino-acid chain: Ribosomal RNA large subunit methyltransferase H (142 aa).

The S-adenosyl-L-methionine site is built by Leu-55 and Gly-87.

This sequence belongs to the RNA methyltransferase RlmH family. In terms of assembly, homodimer.

It localises to the cytoplasm. The catalysed reaction is pseudouridine(1915) in 23S rRNA + S-adenosyl-L-methionine = N(3)-methylpseudouridine(1915) in 23S rRNA + S-adenosyl-L-homocysteine + H(+). Functionally, specifically methylates the pseudouridine at position 1915 (m3Psi1915) in 23S rRNA. The sequence is that of Ribosomal RNA large subunit methyltransferase H from Sphingopyxis alaskensis (strain DSM 13593 / LMG 18877 / RB2256) (Sphingomonas alaskensis).